A 746-amino-acid polypeptide reads, in one-letter code: MEINSKPMELLVTELNMLLKLLDHETLSCATEEKKMAVKNLLRQLQPSVTAKDYMYVNTSVYRNGTSFVESLFETFDCDLGDLKVEMEDQKKEPEANHTVTKPSKTDSPPPLPNTPPPEDYYEEAVPLSPGKMPEYITSRSSSSPPNSIEDGYYEDAENNYPTTQVNGRRKNSYNDSDALSSSYESYDEEEEEKGQRLTHQWPSEENSMAPVRDCHICAFLLRKKRFGQWAKQLTVIRENRLQCYKSSKDQSPYTDIPLSLCSVIYVPKDGRRKKHELRFTLPGGEALVLAVQSKEQAEKWLHVVRDVTGQGNGLDSPSSPMIPKKIELDKWCSAEKQTSDSDSMPSGESARDIRENGKPKRGALSELTGTVSRAAGRKITRIISFSKRKPPLPGDSRSSFDHDPRCGYVGVLVNRCWREHWCRVRAGSLYLYQEKGEQRVPHTTVGLKGCEVVPGLGPKHPFALRILKGGAEVAALEASCSEDMGRWLGVLLAETGSSADPESLHYDYVDVETIANIRTAARHSFLWATSTGSRTYDEVPFETEQENERLRGRAQTKRRSSFSSSDTGKPSPQITLKRHGSNANQYGRYGKTRAQEDARRYLKEKEDLETEIDSIRTALVALRKKKREAKEKMKSATDKQKLALEECVTKLEDSCRVKEGDRVDLELKLTQVKENLKKSLAGGEMEVPTESKPAHKTQRTEAQYMESFLPVNCASEMRKRPPSIYASTKGNVMQKAKEWESKKGT.

Residues Glu88–Glu206 form a disordered region. Residues His98–Asp107 are compositionally biased toward polar residues. Residues Ser108–Glu119 show a composition bias toward pro residues. The segment covering Ser139–Ser148 has biased composition (low complexity). The PH 1 domain maps to Asp214 to Gly310. The interval Glu336–Thr371 is disordered. Residues Ser350–Lys359 show a composition bias toward basic and acidic residues. Residues Arg406–Gly497 enclose the PH 2 domain. Disordered regions lie at residues Glu539 to Gln596 and Pro723 to Thr746. Positions Ser562–Ile575 are enriched in polar residues. A coiled-coil region spans residues Gly591–Ala682. The span at Lys736–Thr746 shows a compositional bias: basic and acidic residues.

The protein resides in the cytoplasm. Its subcellular location is the cell projection. It localises to the podosome. It is found in the invadopodium. The protein localises to the cytoskeleton. The protein resides in the stress fiber. Its function is as follows. May be involved in podosome and invadosome formation. The sequence is that of Actin filament-associated protein 1-like 1 (afap1l1) from Danio rerio (Zebrafish).